The following is a 652-amino-acid chain: MVSRTDRSSSSTSKAVTSSPSTSSLSSAASSPSVSSSSSSSSVSAAGMTAVSTGPLTGSRKTWLVGADPDLRVPMREIVLTTGDTVVVYDTSGPYTDPGVTIDVRRGLPATRDSWIAQRGDTAPDERRTVPGTGASGPGTLGSGTPGSGTPGSGPLGLGGTDLDGRVRVPRRAVPGRPSITQLGYARRGQITREMEFVALREGLPVETVRAEIAAGRAVLPANVNHPESEPMAIGRAFLVKINANLGNSAVTSSIEEEVEKMVWATRWGADTVMDLSTGSDIALTREWIIRNAPVPVGTVPIYQALEKVGGRPEKLSWEVYRDTVIEQCEQGVDYMTVHAGVLLRYVPLTARRRTGIVSRGGSILASWCLAHHEENFLYTHFAELCEIFAAYDVTFSLGDGLRPGSIADANDEAQLAELATLGELTQVAWEHDVQVMIEGPGHVPMNKIEENVQLQRELCHDAPFYTLGPLTTDIAPGYDHITSAIGAAMIGWAGTAMLCYVTPKEHLGLPDRDDVKAGVIAYKIAAHAADLAKGHPGAQAWDDALSDARFEFRWADQFHLALDPDTARAFHDETLPAPAAKSAHFCSMCGPHFCSMKISHQVRAHAGGDGLDPAGHGADPAGDEAVTAGLREKAAEFNAAGNRIYLPVANS.

2 disordered regions span residues 1 to 45 (MVSR…SVSA) and 118 to 166 (QRGD…LDGR). A compositionally biased stretch (low complexity) spans 8–45 (SSSSTSKAVTSSPSTSSLSSAASSPSVSSSSSSSSVSA). Positions 134–162 (GASGPGTLGSGTPGSGTPGSGPLGLGGTD) are enriched in gly residues. Substrate-binding positions include N245, M274, Y303, H339, 359 to 361 (SRG), 400 to 403 (DGLR), and E439. Residue H443 participates in Zn(2+) binding. A substrate-binding site is contributed by Y466. H507 lines the Zn(2+) pocket. Residues C587, C590, and C595 each contribute to the [4Fe-4S] cluster site.

This sequence belongs to the ThiC family. Requires [4Fe-4S] cluster as cofactor.

The catalysed reaction is 5-amino-1-(5-phospho-beta-D-ribosyl)imidazole + S-adenosyl-L-methionine = 4-amino-2-methyl-5-(phosphooxymethyl)pyrimidine + CO + 5'-deoxyadenosine + formate + L-methionine + 3 H(+). It participates in cofactor biosynthesis; thiamine diphosphate biosynthesis. Its function is as follows. Catalyzes the synthesis of the hydroxymethylpyrimidine phosphate (HMP-P) moiety of thiamine from aminoimidazole ribotide (AIR) in a radical S-adenosyl-L-methionine (SAM)-dependent reaction. The sequence is that of Phosphomethylpyrimidine synthase from Frankia casuarinae (strain DSM 45818 / CECT 9043 / HFP020203 / CcI3).